The following is a 696-amino-acid chain: MAMARLGSWLGEAQWLALVSLFVAALATVGLYLAQWALARARPQPQRRAVEPGEGPRPGSDALLSWILTLGSWRSQWQAAWVTALNEEAERKGGPPFLSFEEDPRQQALELVVQEVSSVLRSAEEKVVVCHVVGQAIQFLVSETPALGAGCRLYDMRLSPFHLQLEFHMKEKREDLQISWSFISVPEMAVNIQPKALGEDQVAETSAMSDVLKDILKHLAGSASPSVVLITKPTTVKEAQNLQCAASTAQESCPPKPPRAHELKLLVRNIHVLLLSEPGASGHINAVCVVQLNDPVQRFSSTLTKNTPDLMWEEEFTFELNAKSKELHLQISEAGRSSEGLLATATVPLDLFKKQPSGPQSFTLTSGSACGSSVLGSVTAEFSYMEPGELKSWPIPPPVPAAKIEKDRTVMPCGTVVTTVTAVKTKPRVDVGRASPLSSDSPVKTPIKVKVIEKDISVQAIACRSAPVSKTLSSSDTELLVLNGSDPVAEVAIRQLSESSKLKLKSPRKKSTIIISGISKTSLSQDHDAALMQGYTASVDSTHQEDAPSHPERAAASAPPEEAESAQASLAPKPQEDELDSWDLEKEPQAAAWSSQVLLDPDGDELSESSMSVLEPGTAKKHKGGILRKGAKLFFRRRHQQKDPGMSQSHNDLVFLEQPEGSRRKGITLTRILNKKLLSRHRNKNTMNGAPVEPCT.

Residues 13–33 (AQWLALVSLFVAALATVGLYL) form a helical membrane-spanning segment. The SMP-LBD domain occupies 51-242 (EPGEGPRPGS…PTTVKEAQNL (192 aa)). A Phosphoserine modification is found at Ser60. The 118-residue stretch at 245–362 (AASTAQESCP…KKQPSGPQSF (118 aa)) folds into the C2 domain. Residues Ser435 and Ser441 each carry the phosphoserine modification. Thr445 is modified (phosphothreonine). The disordered stretch occupies residues 539–580 (VDSTHQEDAPSHPERAAASAPPEEAESAQASLAPKPQEDELD). Basic and acidic residues predominate over residues 542–553 (THQEDAPSHPER). Residues 554 to 572 (AAASAPPEEAESAQASLAP) show a composition bias toward low complexity. Ser581 is modified (phosphoserine).

The protein localises to the membrane. The protein is C2 domain-containing protein 2 (C2CD2) of Homo sapiens (Human).